Reading from the N-terminus, the 606-residue chain is Electron transfer flavoprotein-ubiquinone oxidoreductase, mitochondrial (606 aa).

Residue 59–73 (VVIVGAGPSGLSTAI) coordinates FAD. A helical transmembrane segment spans residues 448 to 468 (PSLHWGTIPGLIYGALEMYIF). Positions 551, 575, 578, and 581 each coordinate [4Fe-4S] cluster.

Belongs to the ETF-QO/FixC family. As to quaternary structure, monomer. [4Fe-4S] cluster serves as cofactor. Requires FAD as cofactor.

It is found in the mitochondrion inner membrane. The enzyme catalyses a ubiquinone + reduced [electron-transfer flavoprotein] = a ubiquinol + oxidized [electron-transfer flavoprotein] + H(+). Accepts electrons from ETF and reduces ubiquinone. The polypeptide is Electron transfer flavoprotein-ubiquinone oxidoreductase, mitochondrial (etfdh) (Dictyostelium discoideum (Social amoeba)).